Reading from the N-terminus, the 399-residue chain is Probable tRNA sulfurtransferase (399 aa).

The region spanning 60-165 is the THUMP domain; it reads YAVMERLKRV…TEGTYISCET (106 aa). ATP contacts are provided by residues 183 to 184, 208 to 209, R265, G287, and Q296; these read LL and HF.

The protein belongs to the ThiI family.

The protein resides in the cytoplasm. It carries out the reaction [ThiI sulfur-carrier protein]-S-sulfanyl-L-cysteine + a uridine in tRNA + 2 reduced [2Fe-2S]-[ferredoxin] + ATP + H(+) = [ThiI sulfur-carrier protein]-L-cysteine + a 4-thiouridine in tRNA + 2 oxidized [2Fe-2S]-[ferredoxin] + AMP + diphosphate. It catalyses the reaction [ThiS sulfur-carrier protein]-C-terminal Gly-Gly-AMP + S-sulfanyl-L-cysteinyl-[cysteine desulfurase] + AH2 = [ThiS sulfur-carrier protein]-C-terminal-Gly-aminoethanethioate + L-cysteinyl-[cysteine desulfurase] + A + AMP + 2 H(+). It participates in cofactor biosynthesis; thiamine diphosphate biosynthesis. Functionally, catalyzes the ATP-dependent transfer of a sulfur to tRNA to produce 4-thiouridine in position 8 of tRNAs, which functions as a near-UV photosensor. Also catalyzes the transfer of sulfur to the sulfur carrier protein ThiS, forming ThiS-thiocarboxylate. This is a step in the synthesis of thiazole, in the thiamine biosynthesis pathway. The sulfur is donated as persulfide by IscS. The protein is Probable tRNA sulfurtransferase of Brevibacillus brevis (strain 47 / JCM 6285 / NBRC 100599).